A 278-amino-acid chain; its full sequence is Protein Rv2133c (278 aa).

This Mycobacterium tuberculosis (strain ATCC 25618 / H37Rv) protein is Protein Rv2133c.